The following is a 34-amino-acid chain: Stromal 70 kDa heat shock-related protein, chloroplastic (34 aa).

Belongs to the heat shock protein 70 family.

The protein localises to the plastid. It is found in the chloroplast stroma. Functionally, interacts with newly imported chloroplast proteins to assist in their maturation. The sequence is that of Stromal 70 kDa heat shock-related protein, chloroplastic from Cucurbita maxima (Pumpkin).